A 715-amino-acid polypeptide reads, in one-letter code: Ribosomal RNA large subunit methyltransferase K/L (715 aa).

One can recognise a THUMP domain in the interval 43–154; that stretch reads TQYRALLWSR…RDDLVLSLDL (112 aa).

The protein belongs to the methyltransferase superfamily. RlmKL family.

The protein localises to the cytoplasm. It catalyses the reaction guanosine(2445) in 23S rRNA + S-adenosyl-L-methionine = N(2)-methylguanosine(2445) in 23S rRNA + S-adenosyl-L-homocysteine + H(+). The enzyme catalyses guanosine(2069) in 23S rRNA + S-adenosyl-L-methionine = N(2)-methylguanosine(2069) in 23S rRNA + S-adenosyl-L-homocysteine + H(+). In terms of biological role, specifically methylates the guanine in position 2445 (m2G2445) and the guanine in position 2069 (m7G2069) of 23S rRNA. The sequence is that of Ribosomal RNA large subunit methyltransferase K/L from Mannheimia succiniciproducens (strain KCTC 0769BP / MBEL55E).